Reading from the N-terminus, the 822-residue chain is DNA gyrase subunit A (822 aa).

Positions 32 to 497 (LPDVRDGLKP…QVLSLEDEDL (466 aa)) constitute a Topo IIA-type catalytic domain. Tyrosine 120 acts as the O-(5'-phospho-DNA)-tyrosine intermediate in catalysis. The short motif at 524-530 (QKRGGRG) is the GyrA-box element.

Belongs to the type II topoisomerase GyrA/ParC subunit family. Heterotetramer, composed of two GyrA and two GyrB chains. In the heterotetramer, GyrA contains the active site tyrosine that forms a transient covalent intermediate with DNA, while GyrB binds cofactors and catalyzes ATP hydrolysis.

It localises to the cytoplasm. It carries out the reaction ATP-dependent breakage, passage and rejoining of double-stranded DNA.. Its function is as follows. A type II topoisomerase that negatively supercoils closed circular double-stranded (ds) DNA in an ATP-dependent manner to modulate DNA topology and maintain chromosomes in an underwound state. Negative supercoiling favors strand separation, and DNA replication, transcription, recombination and repair, all of which involve strand separation. Also able to catalyze the interconversion of other topological isomers of dsDNA rings, including catenanes and knotted rings. Type II topoisomerases break and join 2 DNA strands simultaneously in an ATP-dependent manner. This Streptococcus pneumoniae (strain ATCC BAA-255 / R6) protein is DNA gyrase subunit A.